A 308-amino-acid chain; its full sequence is Ribosomal RNA small subunit methyltransferase H (308 aa).

S-adenosyl-L-methionine contacts are provided by residues 34-36 (GGH), Asp-54, Phe-80, Asp-101, and Gln-108.

The protein belongs to the methyltransferase superfamily. RsmH family.

It is found in the cytoplasm. It carries out the reaction cytidine(1402) in 16S rRNA + S-adenosyl-L-methionine = N(4)-methylcytidine(1402) in 16S rRNA + S-adenosyl-L-homocysteine + H(+). Its function is as follows. Specifically methylates the N4 position of cytidine in position 1402 (C1402) of 16S rRNA. This chain is Ribosomal RNA small subunit methyltransferase H, found in Ureaplasma urealyticum serovar 10 (strain ATCC 33699 / Western).